The primary structure comprises 507 residues: Dihydrolipoyl dehydrogenase 1, mitochondrial (507 aa).

The N-terminal 36 residues, 1–36 (MAMASLARRKAYFLTRNLSNSPTDALRFSFSLSRGF), are a transit peptide targeting the mitochondrion. Residues 73–82 (EKRGALGGTC), Lys-91, Gly-155, and 184–186 (TGS) each bind FAD. An intrachain disulfide couples Cys-82 to Cys-87. NAD(+) contacts are provided by residues 221–228 (GAGYIGLE), Glu-244, Val-278, and Gly-313. FAD is bound by residues Asp-354 and 360–363 (MLAH). The Proton acceptor role is filled by His-486.

The protein belongs to the class-I pyridine nucleotide-disulfide oxidoreductase family. As to quaternary structure, homodimer. Part of both the glycine cleavage system composed of four proteins: P, T, L and H and of the pyruvate dehydrogenase complex containing multiple copies of three enzymatic components: pyruvate dehydrogenase (E1), dihydrolipoamide acetyltransferase (E2) and lipoamide dehydrogenase (E3). FAD serves as cofactor. S-nytrosylated at unknown positions. Preferentially expressed in leaves, flowers and siliques and at a lower level in roots and stems.

The protein localises to the mitochondrion matrix. The catalysed reaction is N(6)-[(R)-dihydrolipoyl]-L-lysyl-[protein] + NAD(+) = N(6)-[(R)-lipoyl]-L-lysyl-[protein] + NADH + H(+). In terms of biological role, lipoamide dehydrogenase is a component of the glycine decarboxylase (GDC) or glycine cleavage system as well as of the alpha-ketoacid dehydrogenase complexes. LPD1 is probably the protein most often associated with the glycine decarboxylase complex while LPD2 is probably incorporated into alpha-ketoacid dehydrogenase complexes. This chain is Dihydrolipoyl dehydrogenase 1, mitochondrial (LPD1), found in Arabidopsis thaliana (Mouse-ear cress).